The chain runs to 106 residues: MIPGEVITPETDIELNVGRETLKVVVANLGDRPIQVGSHFHFYEANDALQFDREVAKGFRLNIAAGTAIRFEPGQSREVELVALAGKREVYGFAGRVMGRLYENVD.

It belongs to the urease beta subunit family. As to quaternary structure, heterotrimer of UreA (gamma), UreB (beta) and UreC (alpha) subunits. Three heterotrimers associate to form the active enzyme.

It localises to the cytoplasm. It carries out the reaction urea + 2 H2O + H(+) = hydrogencarbonate + 2 NH4(+). It functions in the pathway nitrogen metabolism; urea degradation; CO(2) and NH(3) from urea (urease route): step 1/1. The chain is Urease subunit beta from Acinetobacter baumannii (strain SDF).